The primary structure comprises 541 residues: Man(5)GlcNAc(2)-PP-dolichol translocation protein RFT1 (541 aa).

The next 11 helical transmembrane spans lie at 16–36 (SGLL…AFIL), 45–62 (GIVN…TFLA), 85–105 (LLWL…WVWL), 123–143 (VLFF…WVLA), 154–176 (LAES…WLPH), 187–207 (LLYT…LLRS), 335–355 (LALL…QLAL), 376–396 (CLYV…FAAM), 414–434 (SFLV…FIMA), 470–490 (VLLG…AFLC), and 499–519 (LAHI…AFLT).

This sequence belongs to the RFT1 family.

It localises to the endoplasmic reticulum membrane. It functions in the pathway protein modification; protein glycosylation. Functionally, intramembrane glycolipid transporter that operates in the biosynthetic pathway of dolichol-linked oligosaccharides, the glycan precursors employed in protein asparagine (N)-glycosylation. The sequential addition of sugars to dolichol pyrophosphate produces dolichol-linked oligosaccharides containing fourteen sugars, including two GlcNAcs, nine mannoses and three glucoses. Once assembled, the oligosaccharide is transferred from the lipid to nascent proteins by oligosaccharyltransferases. The assembly of dolichol-linked oligosaccharides begins on the cytosolic side of the endoplasmic reticulum membrane and finishes in its lumen. RFT1 could mediate the translocation of the cytosolically oriented intermediate DolPP-GlcNAc2Man5, produced by ALG11, into the ER lumen where dolichol-linked oligosaccharides assembly continues. However, the intramembrane lipid transporter activity could not be confirmed in vitro. This Mus musculus (Mouse) protein is Man(5)GlcNAc(2)-PP-dolichol translocation protein RFT1.